Consider the following 696-residue polypeptide: Two-component response regulator ORR22 (696 aa).

The Response regulatory domain maps to 27-142 (RVLAVDDDPV…ELRNIWQHVV (116 aa)). Residue aspartate 78 is modified to 4-aspartylphosphate. Positions 154 to 214 (LDFSKECNKP…DYQENDEPSA (61 aa)) are disordered. Over residues 176-185 (TCGSSDQNGR) the composition is skewed to polar residues. Positions 195–211 (GEDDDEGDDNDYQENDE) are enriched in acidic residues. Residues 214 to 273 (AAKKPRVVWSVELHRKFVAAVNQLGIDKAVPKRILELMNVEKLTRENVASHLQKYRLYLK) constitute a DNA-binding region (myb-like GARP).

It belongs to the ARR family. Type-B subfamily. Post-translationally, two-component system major event consists of a His-to-Asp phosphorelay between a sensor histidine kinase (HK) and a response regulator (RR). In plants, the His-to-Asp phosphorelay involves an additional intermediate named Histidine-containing phosphotransfer protein (HPt). This multistep phosphorelay consists of a His-Asp-His-Asp sequential transfer of a phosphate group between first a His and an Asp of the HK protein, followed by the transfer to a conserved His of the HPt protein and finally the transfer to an Asp in the receiver domain of the RR protein.

The protein resides in the nucleus. Functionally, transcriptional activator that binds specific DNA sequence. Functions as a response regulator involved in His-to-Asp phosphorelay signal transduction system. Phosphorylation of the Asp residue in the receiver domain activates the ability of the protein to promote the transcription of target genes. May directly activate some type-A response regulators in response to cytokinins. This chain is Two-component response regulator ORR22, found in Oryza sativa subsp. indica (Rice).